The chain runs to 1005 residues: Myosin IE heavy chain (1005 aa).

Residues 8–693 (EGVPDFVLLN…TLFYFEEKRE (686 aa)) form the Myosin motor domain. Residue 101 to 108 (GESGAGKT) participates in ATP binding. A disordered region spans residues 539-562 (SDPLVQGLFPPTRPEDSKKRPETA). Basic and acidic residues predominate over residues 551-560 (RPEDSKKRPE). The interval 556 to 630 (KKRPETAGSQ…RAGFAGRIEY (75 aa)) is actin-binding. 2 IQ domains span residues 694–722 (LEMPRIVTLIQKTWRGYRARSKWNQRKAA) and 716–745 (WNQRKAAIKIQLFYRSYRYKKWFRELHRAF). Positions 810–1004 (KKKWDFRRHF…KGNQATIQFK (195 aa)) constitute a TH1 domain.

This sequence belongs to the TRAFAC class myosin-kinesin ATPase superfamily. Myosin family. As to quaternary structure, myosin I heavy chain is single-headed. Dimer of a heavy and a light chain. Inability to self-assemble into filaments.

In terms of biological role, myosin is a protein that binds to actin and has ATPase activity that is activated by actin. May play a role in moving membranes relative to actin. The chain is Myosin IE heavy chain (myoE) from Dictyostelium discoideum (Social amoeba).